Consider the following 161-residue polypeptide: Arachidonate 5-lipoxygenase-activating protein (161 aa).

The Lumenal portion of the chain corresponds to 1–8 (MDQETVGN). A helical transmembrane segment spans residues 9–30 (VVLLAIVTLISVVQNGFFAHKV). Topologically, residues 31–52 (EHESRTQNGRSFQRTGTLAFER) are cytoplasmic. The helical transmembrane segment at 53–77 (VYTANQNCVDAYPTFLAVLWSAGLL) threads the bilayer. Over 78-80 (CSQ) the chain is Lumenal. A helical transmembrane segment spans residues 81-102 (VPAAFAGLMYLLVRQKYFVGYL). Residues 103 to 107 (GERTQ) are Cytoplasmic-facing. The stretch at 108-115 (STPGYIFG) is an intramembrane region. The helical transmembrane segment at 116–128 (KRIILFLFLMSVA) threads the bilayer. At 129-161 (GIFNYYLIFFFGSDFENYIKTVTTTISPLLLIP) the chain is on the lumenal side.

This sequence belongs to the MAPEG family. In terms of assembly, homotrimer. Interacts with LTC4S and ALOX5.

The protein localises to the nucleus membrane. It localises to the endoplasmic reticulum membrane. In terms of biological role, required for leukotriene biosynthesis by ALOX5 (5-lipoxygenase). Anchors ALOX5 to the membrane. Binds arachidonic acid, and could play an essential role in the transfer of arachidonic acid to ALOX5. Binds to MK-886, a compound that blocks the biosynthesis of leukotrienes. This is Arachidonate 5-lipoxygenase-activating protein (ALOX5AP) from Macaca fascicularis (Crab-eating macaque).